A 209-amino-acid chain; its full sequence is Uracil phosphoribosyltransferase (209 aa).

5-phospho-alpha-D-ribose 1-diphosphate-binding positions include R79, R104, and 131-139; that span reads DPMLATGGS. Uracil is bound by residues I194 and 199 to 201; that span reads GDA. D200 contacts 5-phospho-alpha-D-ribose 1-diphosphate.

The protein belongs to the UPRTase family. Mg(2+) serves as cofactor.

The catalysed reaction is UMP + diphosphate = 5-phospho-alpha-D-ribose 1-diphosphate + uracil. It functions in the pathway pyrimidine metabolism; UMP biosynthesis via salvage pathway; UMP from uracil: step 1/1. Its activity is regulated as follows. Allosterically activated by GTP. Functionally, catalyzes the conversion of uracil and 5-phospho-alpha-D-ribose 1-diphosphate (PRPP) to UMP and diphosphate. The polypeptide is Uracil phosphoribosyltransferase (Streptococcus suis (strain 05ZYH33)).